Reading from the N-terminus, the 2025-residue chain is E3 ubiquitin-protein ligase TRIP12 (2025 aa).

Residues 1–10 (MSNRPNNNPG) are compositionally biased toward polar residues. The segment at 1–404 (MSNRPNNNPG…SGESESDDSE (404 aa)) is disordered. N-acetylserine is present on Ser-2. Residue Ser-12 is modified to Phosphoserine. Positions 18–27 (RNTAGAQPQD) are enriched in polar residues. Over residues 48-70 (DPDRANTSERQKTGQVPKKDNSR) the composition is skewed to basic and acidic residues. Phosphoserine occurs at positions 77, 85, and 100. Composition is skewed to polar residues over residues 78-88 (PDYNRTNSPSS), 99-108 (ESLSETNKPP), and 119-132 (EQQL…STSK). 2 stretches are compositionally biased toward low complexity: residues 154–166 (SSCV…SEST) and 175–216 (PTKL…SSTV). Position 181 is an N6-acetyllysine (Lys-181). Positions 280 to 290 (PGSSKSETSKP) are enriched in polar residues. Phosphoserine occurs at positions 310 and 312. Polar residues predominate over residues 326–338 (QKTTGSCASTSRR). Positions 346 to 358 (GAAEARRQEKMAD) are enriched in basic and acidic residues. Residues 362–371 (NQETVNSSAA) are compositionally biased toward polar residues. A compositionally biased stretch (low complexity) spans 379–397 (GAAASSSVAGAVGMTTSGE). A WWE domain is found at 755 to 869 (MLKKGNAQNT…DPELAKSFIK (115 aa)). The interval 970–1077 (ESLLTSPPKA…QSPKSSFLAS (108 aa)) is disordered. Ser-975 carries the phosphoserine modification. Over residues 983 to 1006 (GSGSLGSTTPASSGTATAATNASA) the composition is skewed to low complexity. Phosphoserine is present on residues Ser-1024 and Ser-1030. Positions 1034 to 1047 (KRKRLPKRGPRRPK) are enriched in basic residues. At Ser-1049 the chain carries Phosphoserine. Basic and acidic residues predominate over residues 1050–1059 (PPRDDDKVDN). Residues 1062–1073 (KSPTTTQSPKSS) show a composition bias toward low complexity. 5 positions are modified to phosphoserine: Ser-1063, Ser-1350, Ser-1355, Ser-1362, and Ser-1409. Thr-1410 carries the phosphothreonine modification. 2 disordered regions span residues 1440-1466 (SSKD…NAKK) and 1601-1620 (TNPE…PRLD). Lys-1458 bears the N6-acetyllysine mark. Residue Ser-1460 is modified to Phosphoserine. Residues 1529–1603 (EIIPTSEFIN…AMQRLLDTNP (75 aa)) are K-box. One can recognise an HECT domain in the interval 1918-2025 (PDHGYTHDSR…REGQQSFHLS (108 aa)). The active-site Glycyl thioester intermediate is the Cys-1992.

Belongs to the UPL family. K-HECT subfamily. In terms of assembly, interacts with MYC; leading to disrupt interaction with isoform p19ARF/ARF of CDKN2A. Interacts with TRADD; leading to disrupt interaction with isoform p19ARF/ARF of CDKN2A. Interacts with SMARCC1; leading to disrupt interaction with SMARCE1.

The protein localises to the nucleus. Its subcellular location is the nucleoplasm. It carries out the reaction S-ubiquitinyl-[E2 ubiquitin-conjugating enzyme]-L-cysteine + [acceptor protein]-L-lysine = [E2 ubiquitin-conjugating enzyme]-L-cysteine + N(6)-ubiquitinyl-[acceptor protein]-L-lysine.. It participates in protein modification; protein ubiquitination. Its function is as follows. E3 ubiquitin-protein ligase involved in ubiquitin fusion degradation (UFD) pathway and regulation of DNA repair. Part of the ubiquitin fusion degradation (UFD) pathway, a process that mediates ubiquitination of protein at their N-terminus, regardless of the presence of lysine residues in target proteins. Acts as a key regulator of DNA damage response by acting as a suppressor of RNF168, an E3 ubiquitin-protein ligase that promotes accumulation of 'Lys-63'-linked histone H2A and H2AX at DNA damage sites, thereby acting as a guard against excessive spreading of ubiquitinated chromatin at damaged chromosomes. In normal cells, mediates ubiquitination and degradation of isoform p19ARF/ARF of CDKN2A, a lysine-less tumor suppressor required for p53/TP53 activation under oncogenic stress. In cancer cells, however, isoform p19ARF/ARF and TRIP12 are located in different cell compartments, preventing isoform p19ARF/ARF ubiquitination and degradation. Does not mediate ubiquitination of isoform p16-INK4a of CDKN2A. Also catalyzes ubiquitination of NAE1 and SMARCE1, leading to their degradation. Ubiquitination and degradation of target proteins is regulated by interaction with proteins such as MYC, TRADD or SMARCC1, which disrupt the interaction between TRIP12 and target proteins. Mediates ubiquitination of ASXL1: following binding to N(6)-methyladenosine methylated DNA, ASXL1 is ubiquitinated by TRIP12, leading to its degradation and subsequent inactivation of the PR-DUB complex. The sequence is that of E3 ubiquitin-protein ligase TRIP12 (Trip12) from Rattus norvegicus (Rat).